The chain runs to 118 residues: Large ribosomal subunit protein uL24 (118 aa).

This sequence belongs to the universal ribosomal protein uL24 family. As to quaternary structure, part of the 50S ribosomal subunit.

Functionally, one of two assembly initiator proteins, it binds directly to the 5'-end of the 23S rRNA, where it nucleates assembly of the 50S subunit. One of the proteins that surrounds the polypeptide exit tunnel on the outside of the subunit. The chain is Large ribosomal subunit protein uL24 from Synechococcus sp. (strain CC9902).